The sequence spans 301 residues: Phomoidride biosynthesis cluster protein F (301 aa).

Its function is as follows. Part of the gene cluster that mediates the biosynthesis of the antihypercholesterolemic agents phomoidrides which are dimeric anhydrides. The function of phiF within the pathway has still to be determined. The pathway begins with the highly reducing polyketide synthase phiA that catalyzes the formation of a C12-fatty acyl-ACP, starting from one acetate and 5 malonate units. The hydrolase phiM is involved in the release of the C12-fatty acyl chain from phiA. The alkylcitrate synthase (ACS) phiJ and the alkylcitrate dehydratase (ACDH) phiI then give rise to decarboxylated monomeric anhydrides by coupling the C12-fatty acyl chain with oxalacetic acid. The cyclase phiC is responsible for the dimerization of the monomeric anhydrides which leads to the production of prephomoidride that contains the characteristic bicyclo[4.3.1]deca-1,6-diene system of phomoidrides. Iterative oxidation catalyzed by the alpha-ketoglutarate-dependent dioxygenase phiK produced then phomoidride A. Finally, the methyltransferase phiE converts phomoidride A to phomoidride B via an acetalization reaction. The phosphatidylethanolamine-binding protein phiB and phiN are not essential for dimerization and their functions have still to be determined. The protein is Phomoidride biosynthesis cluster protein F of Fungal sp. (strain ATCC 74256).